Here is a 232-residue protein sequence, read N- to C-terminus: Cytidylate kinase (232 aa).

The tract at residues Met1–Ser21 is disordered. Gly13–Ser21 contributes to the ATP binding site.

This sequence belongs to the cytidylate kinase family. Type 1 subfamily.

Its subcellular location is the cytoplasm. The catalysed reaction is CMP + ATP = CDP + ADP. It catalyses the reaction dCMP + ATP = dCDP + ADP. The chain is Cytidylate kinase from Nocardia farcinica (strain IFM 10152).